The chain runs to 729 residues: Fatty acid oxidation complex subunit alpha (729 aa).

The tract at residues 1–189 (MLYKGDTLYL…KIGLVDGVVK (189 aa)) is enoyl-CoA hydratase/isomerase. Residue Asp296 participates in substrate binding. The 3-hydroxyacyl-CoA dehydrogenase stretch occupies residues 311–729 (ETPKQAAVLG…ARPVGSLKTA (419 aa)). Residues Met324, Asp343, 400–402 (VVE), Lys407, and Ser429 contribute to the NAD(+) site. His450 acts as the For 3-hydroxyacyl-CoA dehydrogenase activity in catalysis. Asn453 contacts NAD(+). Residues Asn500 and Tyr660 each coordinate substrate. A disordered region spans residues 707–729 (TRHNEPYYPPVEPARPVGSLKTA).

It in the N-terminal section; belongs to the enoyl-CoA hydratase/isomerase family. This sequence in the C-terminal section; belongs to the 3-hydroxyacyl-CoA dehydrogenase family. As to quaternary structure, heterotetramer of two alpha chains (FadB) and two beta chains (FadA).

The enzyme catalyses a (3S)-3-hydroxyacyl-CoA + NAD(+) = a 3-oxoacyl-CoA + NADH + H(+). It catalyses the reaction a (3S)-3-hydroxyacyl-CoA = a (2E)-enoyl-CoA + H2O. It carries out the reaction a 4-saturated-(3S)-3-hydroxyacyl-CoA = a (3E)-enoyl-CoA + H2O. The catalysed reaction is (3S)-3-hydroxybutanoyl-CoA = (3R)-3-hydroxybutanoyl-CoA. The enzyme catalyses a (3Z)-enoyl-CoA = a 4-saturated (2E)-enoyl-CoA. It catalyses the reaction a (3E)-enoyl-CoA = a 4-saturated (2E)-enoyl-CoA. The protein operates within lipid metabolism; fatty acid beta-oxidation. Functionally, involved in the aerobic and anaerobic degradation of long-chain fatty acids via beta-oxidation cycle. Catalyzes the formation of 3-oxoacyl-CoA from enoyl-CoA via L-3-hydroxyacyl-CoA. It can also use D-3-hydroxyacyl-CoA and cis-3-enoyl-CoA as substrate. The sequence is that of Fatty acid oxidation complex subunit alpha from Salmonella typhi.